A 167-amino-acid chain; its full sequence is uncharacterized protein (167 aa).

The a divalent metal cation site is built by H48, H127, and H131.

It belongs to the DinB family.

This is an uncharacterized protein from Bacillus subtilis (strain 168).